The primary structure comprises 815 residues: Polyribonucleotide nucleotidyltransferase (815 aa).

Mg(2+) contacts are provided by Asp489 and Asp495. A KH domain is found at 556–615 (PRFYTLQIPTDKIRDLIGPGGKVIRGIVEATGVKIDVEDSGKVNVASSDQEAAKKALKMI). In terms of domain architecture, S1 motif spans 625-692 (GKTYLGTVTR…DGNRIKLSRK (68 aa)). The disordered stretch occupies residues 700-815 (AKMATEGGGD…GGGGGGRGRG (116 aa)). Residues 723–734 (APGGVTFEGGYE) are compositionally biased toward gly residues. Acidic residues predominate over residues 735-745 (GGDEPEVEEGE). The span at 775–815 (PHGGGGGAGRGGRGRRPGGGGGGGRGGHGGRGGGGGGRGRG) shows a compositional bias: gly residues.

This sequence belongs to the polyribonucleotide nucleotidyltransferase family. The cofactor is Mg(2+).

It is found in the cytoplasm. The catalysed reaction is RNA(n+1) + phosphate = RNA(n) + a ribonucleoside 5'-diphosphate. Its function is as follows. Involved in mRNA degradation. Catalyzes the phosphorolysis of single-stranded polyribonucleotides processively in the 3'- to 5'-direction. This chain is Polyribonucleotide nucleotidyltransferase, found in Koribacter versatilis (strain Ellin345).